A 154-amino-acid chain; its full sequence is Xanthine-guanine phosphoribosyltransferase (154 aa).

5-phospho-alpha-D-ribose 1-diphosphate is bound by residues 37 to 38 (RG), arginine 69, and 88 to 96 (EDLVDSGDT). Arginine 69 contributes to the GMP binding site. Aspartate 89 serves as a coordination point for Mg(2+). Guanine contacts are provided by aspartate 92 and isoleucine 135. Xanthine is bound by residues aspartate 92 and isoleucine 135. GMP-binding positions include 92–96 (DSGDT) and 134–135 (WI).

It belongs to the purine/pyrimidine phosphoribosyltransferase family. XGPT subfamily. As to quaternary structure, homotetramer. Mg(2+) is required as a cofactor.

The protein localises to the cell inner membrane. The catalysed reaction is GMP + diphosphate = guanine + 5-phospho-alpha-D-ribose 1-diphosphate. The enzyme catalyses XMP + diphosphate = xanthine + 5-phospho-alpha-D-ribose 1-diphosphate. It catalyses the reaction IMP + diphosphate = hypoxanthine + 5-phospho-alpha-D-ribose 1-diphosphate. Its pathway is purine metabolism; GMP biosynthesis via salvage pathway; GMP from guanine: step 1/1. It participates in purine metabolism; XMP biosynthesis via salvage pathway; XMP from xanthine: step 1/1. Its function is as follows. Purine salvage pathway enzyme that catalyzes the transfer of the ribosyl-5-phosphate group from 5-phospho-alpha-D-ribose 1-diphosphate (PRPP) to the N9 position of the 6-oxopurines guanine and xanthine to form the corresponding ribonucleotides GMP (guanosine 5'-monophosphate) and XMP (xanthosine 5'-monophosphate), with the release of PPi. To a lesser extent, also acts on hypoxanthine. This is Xanthine-guanine phosphoribosyltransferase from Vibrio atlanticus (strain LGP32) (Vibrio splendidus (strain Mel32)).